We begin with the raw amino-acid sequence, 370 residues long: Trans-enoyl reductase xenG (370 aa).

The disordered stretch occupies residues 1 to 32 (MASTGLPQLPPSQKAVIQSEKTPGAFEVSENR). NADP(+) contacts are provided by residues 54–57 (CDWK), 177–180 (STAS), 200–203 (SPKN), Tyr218, 265–266 (FE), and 356–357 (VS).

This sequence belongs to the zinc-containing alcohol dehydrogenase family. As to quaternary structure, monomer.

It participates in mycotoxin biosynthesis. Its function is as follows. Trans-enoyl reductase; part of the gene cluster that mediates the biosynthesis of xenoacremones such as xenoacremone A, a compound that shows inhibitory activity toward the PI3K/AKT signaling pathway and which has the ability to induce apoptosis of A549 lung cancer cells. Within the pathway, cooperation of the hybrid PKS-NRPS xenE and the trans-acting enoyl reductase xenG is responsible for the formation of the reduced tyrosine-nonaketide derivative. The alpha/beta hydrolase xenA then accelerates intramolecular nucleophilic attack to give a pyrrolidone derivative. Subsequently, three enzymes, xenF, xenD, and xenC, coordinately participate in the conversion to xenoacremone B. XenF catalyzes sigmatropic rearrangement to form an A-ring, which leads to an unusual intermediate with a hexane ring, which is required for the formation of the tricarbocyclic product. Epoxidation catalyzed by xenD and the formation of the paracyclophane ether catalyzed by xenC initiate a spontaneous intramolecular Diels-Alder (IMDA) reaction to yield xenoacremone B. Spontaneous hydration of xenoacremone B leads to the formation of xenoacremone A, which undergoes subsequent methylation to afford xenoacremone C. The chain is Trans-enoyl reductase xenG from Xenoacremonium sinensis (Endophyte fungus).